A 1433-amino-acid polypeptide reads, in one-letter code: DNA-directed RNA polymerase subunit beta' (1433 aa).

Zn(2+) contacts are provided by Cys-66, Cys-68, Cys-81, and Cys-84. Positions 328-347 are disordered; sequence RKSSAVKTDSNRPLKSLSDS. The segment covering 329-346 has biased composition (polar residues); sequence KSSAVKTDSNRPLKSLSD. Mg(2+) contacts are provided by Asp-477, Asp-479, and Asp-481. Residues Cys-825, Cys-899, Cys-906, and Cys-909 each coordinate Zn(2+).

This sequence belongs to the RNA polymerase beta' chain family. As to quaternary structure, the RNAP catalytic core consists of 2 alpha, 1 beta, 1 beta' and 1 omega subunit. When a sigma factor is associated with the core the holoenzyme is formed, which can initiate transcription. Requires Mg(2+) as cofactor. The cofactor is Zn(2+).

The enzyme catalyses RNA(n) + a ribonucleoside 5'-triphosphate = RNA(n+1) + diphosphate. Functionally, DNA-dependent RNA polymerase catalyzes the transcription of DNA into RNA using the four ribonucleoside triphosphates as substrates. The sequence is that of DNA-directed RNA polymerase subunit beta' from Christiangramia forsetii (strain DSM 17595 / CGMCC 1.15422 / KT0803) (Gramella forsetii).